Here is a 563-residue protein sequence, read N- to C-terminus: Chaperonin GroEL 1 (563 aa).

Residues 29-32 (TIGP), 86-90 (DGTTT), Gly-413, 476-478 (NAA), and Asp-492 contribute to the ATP site. The disordered stretch occupies residues 520–545 (DKPEPPSPAGGEGGGDPMGGMGGMGG). Residues 529–545 (GGEGGGDPMGGMGGMGG) are compositionally biased toward gly residues.

This sequence belongs to the chaperonin (HSP60) family. Forms a cylinder of 14 subunits composed of two heptameric rings stacked back-to-back. Interacts with the co-chaperonin GroES.

It localises to the cytoplasm. It carries out the reaction ATP + H2O + a folded polypeptide = ADP + phosphate + an unfolded polypeptide.. Together with its co-chaperonin GroES, plays an essential role in assisting protein folding. The GroEL-GroES system forms a nano-cage that allows encapsulation of the non-native substrate proteins and provides a physical environment optimized to promote and accelerate protein folding. This is Chaperonin GroEL 1 from Prochlorococcus marinus (strain SARG / CCMP1375 / SS120).